The sequence spans 78 residues: Protein GPR15LG (78 aa).

Positions 1–24 are cleaved as a signal peptide; sequence MRLLALSGLLCMLLLCFCIFSSEG. Intrachain disulfides connect Cys-37–Cys-60 and Cys-38–Cys-57.

Interacts with SUSD2; the interaction is direct. Highly abundant in the testis, colon, eye, and tongue. Detected in the epithelial layer of the colon, but not the small intestine.

It localises to the secreted. In terms of biological role, highly cationic protein that has multiple functions. Acts as a chemotactic factor that mediates lymphocytes recruitment to epithelia through binding and activation of the G-protein coupled receptor GPR15. May be a tumor suppressor; together with SUSD2 has a growth inhibitory effect on colon cancer cells which includes G1 cell cycle arrest. May regulate keratinocyte proliferation. In addition, through activation of Mas-related G protein-coupled receptors (MRGPRs) contributes to pruritogenesis by activating itch-selective sensory neurons and mast cells degranulation. Its function is as follows. Has antimicrobial activity against Gram-positive bacteria, including Staphylococcus aureus and Actinomyces spec., and Mycoplasma hominis and lentivirus. The sequence is that of Protein GPR15LG (Gpr15lg) from Mus musculus (Mouse).